The primary structure comprises 265 residues: Flagellar brake protein YcgR (265 aa).

The region spanning 135–252 (QRRESYRLET…DETIQRYIFR (118 aa)) is the PilZ domain.

This sequence belongs to the YcgR family. In terms of assembly, monomer. Interacts with the flagellar basal bodies.

It is found in the bacterial flagellum basal body. Acts as a flagellar brake, regulating swimming and swarming in a bis-(3'-5') cyclic diguanylic acid (c-di-GMP)-dependent manner. Binds 1 c-di-GMP dimer per subunit. Increasing levels of c-di-GMP lead to decreased motility. The sequence is that of Flagellar brake protein YcgR from Xanthomonas campestris pv. campestris (strain B100).